Here is a 227-residue protein sequence, read N- to C-terminus: Cleavage and polyadenylation specificity factor subunit 5 (227 aa).

Ser2 carries the post-translational modification N-acetylserine. A necessary for RNA-binding region spans residues 2–147 (SVVPPNRSQT…DWVIDDCIGN (146 aa)). Arg15 bears the Omega-N-methylarginine mark. Lys23 and Lys29 each carry N6-acetyllysine. The residue at position 40 (Tyr40) is a Phosphotyrosine. Lys56 is subject to N6-acetyllysine. One can recognise a Nudix hydrolase domain in the interval 76–201 (MRRTVEGVLI…KLVAAPLFEL (126 aa)). Residues 81–160 (EGVLIVHEHR…PNFEPPQYPY (80 aa)) are necessary for interactions with PAPOLA and PABPN1. The tract at residues 102–104 (TFF) is interaction with RNA. The short motif at 109-130 (GELNPGEDEVEGLKRLMTEILG) is the Nudix box element.

The protein belongs to the Nudix hydrolase family. CPSF5 subfamily. As to quaternary structure, homodimer (via N- and C-terminus); binds RNA as homodimer. Component of the cleavage factor Im (CFIm) complex which is a heterotetramer composed of two subunits of NUDT21/CPSF5 and two subunits of CPSF6 or CPSF7 or a heterodimer of CPSF6 and CPSF7. The cleavage factor Im (CFIm) complex associates with the CPSF and CSTF complexes to promote the assembly of the core mRNA 3'-processing machinery. Interacts with CPSF6 (via the RRM domain); this interaction is direct and enhances binding to RNA. Interacts with CPSF7. Interacts with FIP1L1; this interaction occurs in a RNA sequence-specific manner. Interacts with PABPN1. Interacts (via N-terminus) with PAPOLA (via C-terminus); this interaction is direct and diminished by acetylation. Interacts with SNRNP70. Interacts with VIRMA. Acetylated mainly by p300/CBP, recruited to the complex by CPSF6. Acetylation decreases interaction with PAPAO. Deacetylated by the class I/II HDACs, HDAC1, HDAC3 and HDAC10, and by the class III HDACs, SIRT1 and SIRT2. As to expression, expressed in testis. Expressed in male germ cells (at protein level).

The protein localises to the nucleus. The protein resides in the cytoplasm. Component of the cleavage factor Im (CFIm) complex that functions as an activator of the pre-mRNA 3'-end cleavage and polyadenylation processing required for the maturation of pre-mRNA into functional mRNAs. CFIm contributes to the recruitment of multiprotein complexes on specific sequences on the pre-mRNA 3'-end, so called cleavage and polyadenylation signals (pA signals). Most pre-mRNAs contain multiple pA signals, resulting in alternative cleavage and polyadenylation (APA) producing mRNAs with variable 3'-end formation. The CFIm complex acts as a key regulator of cleavage and polyadenylation site choice during APA through its binding to 5'-UGUA-3' elements localized in the 3'-untranslated region (UTR) for a huge number of pre-mRNAs. NUDT21/CPSF5 activates indirectly the mRNA 3'-processing machinery by recruiting CPSF6 and/or CPSF7. Binds to 5'-UGUA-3' elements localized upstream of pA signals that act as enhancers of pre-mRNA 3'-end processing. The homodimer mediates simultaneous sequence-specific recognition of two 5'-UGUA-3' elements within the pre-mRNA. Plays a role in somatic cell fate transitions and pluripotency by regulating widespread changes in gene expression through an APA-dependent function. Binds to chromatin. Binds to, but does not hydrolyze mono- and di-adenosine nucleotides. This is Cleavage and polyadenylation specificity factor subunit 5 from Mus musculus (Mouse).